A 148-amino-acid chain; its full sequence is Ribonuclease H (148 aa).

The RNase H type-1 domain maps to 1–143 (MNQVVIYTDG…ADMLANKGVE (143 aa)). Mg(2+) contacts are provided by Asp-9, Glu-47, Asp-69, and Asp-135.

Belongs to the RNase H family. Monomer. The cofactor is Mg(2+).

It is found in the cytoplasm. The catalysed reaction is Endonucleolytic cleavage to 5'-phosphomonoester.. Endonuclease that specifically degrades the RNA of RNA-DNA hybrids. This chain is Ribonuclease H, found in Acidovorax sp. (strain JS42).